The chain runs to 125 residues: Protein ApaG (125 aa).

The ApaG domain occupies 1–125 (MIDSPRVCVQ…FRLAVPTFIH (125 aa)).

The sequence is that of Protein ApaG from Enterobacter sp. (strain 638).